Here is a 476-residue protein sequence, read N- to C-terminus: uncharacterized protein (476 aa).

Helical transmembrane passes span Phe-4–Ala-24, Ala-81–Ile-101, Trp-141–Val-161, Phe-174–Thr-194, Phe-207–Ile-227, Val-233–Gly-253, Met-300–Leu-320, Phe-351–Ala-371, Ile-391–Leu-411, and Ile-414–Val-434.

This sequence belongs to the alanine or glycine:cation symporter (AGCS) (TC 2.A.25) family.

The protein resides in the cell inner membrane. This is an uncharacterized protein from Escherichia coli (strain K12).